A 554-amino-acid chain; its full sequence is Hydroxylamine reductase (554 aa).

Positions 3, 6, 18, and 25 each coordinate [2Fe-2S] cluster. Residues histidine 252, glutamate 276, cysteine 320, cysteine 408, cysteine 436, cysteine 461, glutamate 495, and lysine 497 each contribute to the hybrid [4Fe-2O-2S] cluster site. Residue cysteine 408 is modified to Cysteine persulfide.

The protein belongs to the HCP family. [2Fe-2S] cluster is required as a cofactor. The cofactor is hybrid [4Fe-2O-2S] cluster.

Its subcellular location is the cytoplasm. It catalyses the reaction A + NH4(+) + H2O = hydroxylamine + AH2 + H(+). Its function is as follows. Catalyzes the reduction of hydroxylamine to form NH(3) and H(2)O. The chain is Hydroxylamine reductase from Shewanella oneidensis (strain ATCC 700550 / JCM 31522 / CIP 106686 / LMG 19005 / NCIMB 14063 / MR-1).